The chain runs to 402 residues: NADH-quinone oxidoreductase subunit D (402 aa).

It belongs to the complex I 49 kDa subunit family. In terms of assembly, NDH-1 is composed of 14 different subunits. Subunits NuoB, C, D, E, F, and G constitute the peripheral sector of the complex.

It localises to the cell inner membrane. It catalyses the reaction a quinone + NADH + 5 H(+)(in) = a quinol + NAD(+) + 4 H(+)(out). In terms of biological role, NDH-1 shuttles electrons from NADH, via FMN and iron-sulfur (Fe-S) centers, to quinones in the respiratory chain. The immediate electron acceptor for the enzyme in this species is believed to be ubiquinone. Couples the redox reaction to proton translocation (for every two electrons transferred, four hydrogen ions are translocated across the cytoplasmic membrane), and thus conserves the redox energy in a proton gradient. This chain is NADH-quinone oxidoreductase subunit D, found in Maricaulis maris (strain MCS10) (Caulobacter maris).